A 142-amino-acid polypeptide reads, in one-letter code: MKIRLPLLALALGMSSPLVHAQMLQPGLWELTTSNMQVDGKPLPDMAFMLGQLKNLPPEQRAMMEGVLAKQGVTVGGNGVRSCLTPEQVATNDIPLQDPKSGCTQKITDRTGNVWKFQFSCPKAQGSGQATFLSDRELTCRH.

This is an uncharacterized protein from Pseudomonas putida (Arthrobacter siderocapsulatus).